A 126-amino-acid polypeptide reads, in one-letter code: Large ribosomal subunit protein bL12 (126 aa).

Residues 107-116 (EDAEKAKSQL) are compositionally biased toward basic and acidic residues. The disordered stretch occupies residues 107–126 (EDAEKAKSQLEEAGATVELK).

Belongs to the bacterial ribosomal protein bL12 family. Homodimer. Part of the ribosomal stalk of the 50S ribosomal subunit. Forms a multimeric L10(L12)X complex, where L10 forms an elongated spine to which 2 to 4 L12 dimers bind in a sequential fashion. Binds GTP-bound translation factors.

Forms part of the ribosomal stalk which helps the ribosome interact with GTP-bound translation factors. Is thus essential for accurate translation. The chain is Large ribosomal subunit protein bL12 from Bifidobacterium adolescentis (strain ATCC 15703 / DSM 20083 / NCTC 11814 / E194a).